The following is a 95-amino-acid chain: Cell division topological specificity factor (95 aa).

Belongs to the MinE family.

Its function is as follows. Prevents the cell division inhibition by proteins MinC and MinD at internal division sites while permitting inhibition at polar sites. This ensures cell division at the proper site by restricting the formation of a division septum at the midpoint of the long axis of the cell. In Microcystis aeruginosa (strain NIES-843 / IAM M-2473), this protein is Cell division topological specificity factor.